The sequence spans 542 residues: Formate--tetrahydrofolate ligase (542 aa).

Residue 53–60 (TPAGEGKT) participates in ATP binding.

It belongs to the formate--tetrahydrofolate ligase family.

It carries out the reaction (6S)-5,6,7,8-tetrahydrofolate + formate + ATP = (6R)-10-formyltetrahydrofolate + ADP + phosphate. The protein operates within one-carbon metabolism; tetrahydrofolate interconversion. This is Formate--tetrahydrofolate ligase from Thermotoga petrophila (strain ATCC BAA-488 / DSM 13995 / JCM 10881 / RKU-1).